The following is a 140-amino-acid chain: Class I hydrophobin C (140 aa).

The N-terminal stretch at 1-23 is a signal peptide; sequence MKFFVPAFLFAATAMALPGSGSA. Cystine bridges form between Cys-41/Cys-114, Cys-49/Cys-108, Cys-50/Cys-85, and Cys-115/Cys-133.

Belongs to the fungal hydrophobin family.

The protein localises to the secreted. Its subcellular location is the cell wall. Its function is as follows. Aerial growth, conidiation, and dispersal of filamentous fungi in the environment rely upon a capability of their secreting small amphipathic proteins called hydrophobins (HPBs) with low sequence identity. Class I can self-assemble into an outermost layer of rodlet bundles on aerial cell surfaces, conferring cellular hydrophobicity that supports fungal growth, development and dispersal; whereas Class II form highly ordered films at water-air interfaces through intermolecular interactions but contribute nothing to the rodlet structure. In P.expansum, hydrophobins contribute to germination, tolerance to cold stress and mycotoxins patulin and citrinin production. HfbC is involved in the virulence on apple. The protein is Class I hydrophobin C of Penicillium expansum (Blue mold rot fungus).